We begin with the raw amino-acid sequence, 239 residues long: O-methyltransferase ankF (239 aa).

Residues E71, 73 to 74 (GT), S79, E98, and A127 each bind S-adenosyl-L-methionine.

This sequence belongs to the class I-like SAM-binding methyltransferase superfamily. Cation-dependent O-methyltransferase family.

It catalyses the reaction NK13650 B + S-adenosyl-L-methionine = NK13650 D + S-adenosyl-L-homocysteine + H(+). It functions in the pathway secondary metabolite biosynthesis. O-methyltransferase; part of the ank cluster that mediates the biosynthesis of NK13650 C, a highly modified cyclo-arginine-tyrosine dipeptide. AnkF converts NK13650 B to produce NK13650 D via methylation of the C-17 phenol group. Within the pathway, the cyclodipeptide synthase ankA acts as the scaffold-generating enzyme and is responsible for formation of the cyclo-Arg-Tyr diketopiperazine (cRY) from L-Arg and L-Tyr. The ankA product cRY is desaturated by the cytochrome P450 monooxygenase ankB to yield a dehydro-cyclodipeptide intermediate. The FAD-dependent monooxygenase ankC then installs the m-OH, ankD catalyzes the attachment of L-homoserine, and ankE ligates citrate to the ankD product to yield NK13650 B. The O-methyltransferase ankF is responsible for methylation of the C-17 phenol group of NK13650 B to produce NK13650 D. Amidation of NK13650 D with L-Asp by ankG then leads to the production of NK13650 C, whereas amidation of NK13650 B produces NK13650 A. This Aspergillus thermomutatus (Neosartorya pseudofischeri) protein is O-methyltransferase ankF.